An 885-amino-acid chain; its full sequence is Alanine--tRNA ligase (885 aa).

Residues His-569, His-573, Cys-672, and His-676 each contribute to the Zn(2+) site.

It belongs to the class-II aminoacyl-tRNA synthetase family. Requires Zn(2+) as cofactor.

The protein resides in the cytoplasm. It catalyses the reaction tRNA(Ala) + L-alanine + ATP = L-alanyl-tRNA(Ala) + AMP + diphosphate. Catalyzes the attachment of alanine to tRNA(Ala) in a two-step reaction: alanine is first activated by ATP to form Ala-AMP and then transferred to the acceptor end of tRNA(Ala). Also edits incorrectly charged Ser-tRNA(Ala) and Gly-tRNA(Ala) via its editing domain. This is Alanine--tRNA ligase from Chlorobaculum tepidum (strain ATCC 49652 / DSM 12025 / NBRC 103806 / TLS) (Chlorobium tepidum).